A 363-amino-acid polypeptide reads, in one-letter code: UDP-N-acetylglucosamine--N-acetylmuramyl-(pentapeptide) pyrophosphoryl-undecaprenol N-acetylglucosamine transferase (363 aa).

UDP-N-acetyl-alpha-D-glucosamine is bound by residues 14-16 (TGG), R171, S200, and Q290.

Belongs to the glycosyltransferase 28 family. MurG subfamily.

The protein resides in the cell inner membrane. It catalyses the reaction di-trans,octa-cis-undecaprenyl diphospho-N-acetyl-alpha-D-muramoyl-L-alanyl-D-glutamyl-meso-2,6-diaminopimeloyl-D-alanyl-D-alanine + UDP-N-acetyl-alpha-D-glucosamine = di-trans,octa-cis-undecaprenyl diphospho-[N-acetyl-alpha-D-glucosaminyl-(1-&gt;4)]-N-acetyl-alpha-D-muramoyl-L-alanyl-D-glutamyl-meso-2,6-diaminopimeloyl-D-alanyl-D-alanine + UDP + H(+). It participates in cell wall biogenesis; peptidoglycan biosynthesis. Its function is as follows. Cell wall formation. Catalyzes the transfer of a GlcNAc subunit on undecaprenyl-pyrophosphoryl-MurNAc-pentapeptide (lipid intermediate I) to form undecaprenyl-pyrophosphoryl-MurNAc-(pentapeptide)GlcNAc (lipid intermediate II). The chain is UDP-N-acetylglucosamine--N-acetylmuramyl-(pentapeptide) pyrophosphoryl-undecaprenol N-acetylglucosamine transferase from Borrelia garinii subsp. bavariensis (strain ATCC BAA-2496 / DSM 23469 / PBi) (Borreliella bavariensis).